A 515-amino-acid polypeptide reads, in one-letter code: Maturase K (515 aa).

It belongs to the intron maturase 2 family. MatK subfamily.

The protein resides in the plastid. The protein localises to the chloroplast. Its function is as follows. Usually encoded in the trnK tRNA gene intron. Probably assists in splicing its own and other chloroplast group II introns. This is Maturase K from Picea abies (Norway spruce).